Consider the following 175-residue polypeptide: Translation initiation factor IF-3, chloroplastic (175 aa).

It belongs to the IF-3 family. Monomer.

It is found in the plastid. The protein localises to the chloroplast. In terms of biological role, IF-3 binds to the 30S ribosomal subunit and shifts the equilibrium between 70S ribosomes and their 50S and 30S subunits in favor of the free subunits, thus enhancing the availability of 30S subunits on which protein synthesis initiation begins. The chain is Translation initiation factor IF-3, chloroplastic from Cyanidioschyzon merolae (strain NIES-3377 / 10D) (Unicellular red alga).